We begin with the raw amino-acid sequence, 112 residues long: Histone H3-4 (112 aa).

The segment at 1-31 (QTGAKAPRKALANKAARKTAPADGGVKKPHR) is disordered.

This sequence belongs to the histone H3 family. As to quaternary structure, the nucleosome is a histone octamer containing two molecules each of H2A, H2B, H3 and H4 assembled in one H3-H4 heterotetramer and two H2A-H2B heterodimers. The octamer wraps approximately 147 bp of DNA.

The protein localises to the nucleus. It localises to the chromosome. Functionally, core component of nucleosome. Nucleosomes wrap and compact DNA into chromatin, limiting DNA accessibility to the cellular machineries which require DNA as a template. Histones thereby play a central role in transcription regulation, DNA repair, DNA replication and chromosomal stability. DNA accessibility is regulated via a complex set of post-translational modifications of histones, also called histone code, and nucleosome remodeling. The polypeptide is Histone H3-4 (H3-4) (Stylonychia lemnae (Ciliate)).